The chain runs to 489 residues: Sphingolipid C9-methyltransferase (489 aa).

A run of 2 helical transmembrane segments spans residues 29-49 and 59-79; these read GAKN…PLFV and TFIF…WTVL. Residues 202-203, 239-247, 265-270, and 295-296 each bind S-adenosyl-L-methionine; these read YT, LLDLGCGWG, TLGKNQ, and YR.

It belongs to the CFA/CMAS family.

It is found in the membrane. It catalyses the reaction a (4E,8E)-4-sphinga-4,8-dienine ceramide + S-adenosyl-L-methionine = a 9-methyl-(4E,8E)-sphinga-4,8-dienine ceramide + S-adenosyl-L-homocysteine + H(+). Its pathway is lipid metabolism; sphingolipid metabolism. In terms of biological role, catalyzes methylation of the sphingoid base component of glucosylceramides (GluCers) at the C9-position. Sphingolipid C9-methylation requires 4,8-desaturated ceramides as substrates. Glucosylceramides play important roles in growth, differentiation and pathogenicity. The methyl group at the C9-position distinguishes fungal glucosylceramides from those of plants and animals, and may thus play a role in host-pathogen interactions enabling the host to recognize the fungal attack and initiate specific defense responses. The sequence is that of Sphingolipid C9-methyltransferase from Komagataella phaffii (strain GS115 / ATCC 20864) (Yeast).